The primary structure comprises 435 residues: Serine--tRNA ligase (435 aa).

241 to 243 (TAE) lines the L-serine pocket. Residue 272–274 (RSE) coordinates ATP. Position 295 (glutamate 295) interacts with L-serine. 359 to 362 (EISS) is an ATP binding site. Serine 395 provides a ligand contact to L-serine.

This sequence belongs to the class-II aminoacyl-tRNA synthetase family. Type-1 seryl-tRNA synthetase subfamily. As to quaternary structure, homodimer. The tRNA molecule binds across the dimer.

Its subcellular location is the cytoplasm. It catalyses the reaction tRNA(Ser) + L-serine + ATP = L-seryl-tRNA(Ser) + AMP + diphosphate + H(+). The enzyme catalyses tRNA(Sec) + L-serine + ATP = L-seryl-tRNA(Sec) + AMP + diphosphate + H(+). It participates in aminoacyl-tRNA biosynthesis; selenocysteinyl-tRNA(Sec) biosynthesis; L-seryl-tRNA(Sec) from L-serine and tRNA(Sec): step 1/1. Catalyzes the attachment of serine to tRNA(Ser). Is also able to aminoacylate tRNA(Sec) with serine, to form the misacylated tRNA L-seryl-tRNA(Sec), which will be further converted into selenocysteinyl-tRNA(Sec). The protein is Serine--tRNA ligase of Actinobacillus pleuropneumoniae serotype 5b (strain L20).